A 37-amino-acid chain; its full sequence is Large ribosomal subunit protein bL36 (37 aa).

It belongs to the bacterial ribosomal protein bL36 family.

In Desulfitobacterium hafniense (strain Y51), this protein is Large ribosomal subunit protein bL36.